A 395-amino-acid chain; its full sequence is Probable L-tyrosine/L-aspartate decarboxylase (395 aa).

Lys-242 is modified (N6-(pyridoxal phosphate)lysine).

This sequence belongs to the group II decarboxylase family. MfnA subfamily. The cofactor is pyridoxal 5'-phosphate.

It catalyses the reaction L-tyrosine + H(+) = tyramine + CO2. The catalysed reaction is L-aspartate + H(+) = beta-alanine + CO2. The protein operates within cofactor biosynthesis; methanofuran biosynthesis. It functions in the pathway cofactor biosynthesis; coenzyme A biosynthesis. In terms of biological role, catalyzes the decarboxylation of L-tyrosine to produce tyramine for methanofuran biosynthesis. Can also catalyze the decarboxylation of L-aspartate to produce beta-alanine for coenzyme A (CoA) biosynthesis. In Methanosarcina barkeri (strain Fusaro / DSM 804), this protein is Probable L-tyrosine/L-aspartate decarboxylase.